The sequence spans 579 residues: Glypican-2 (579 aa).

The signal sequence occupies residues 1 to 23 (MSALRPLLLLLLPLCPGPGPGPG). 3 O-linked (Xyl...) (heparan sulfate) serine glycosylation sites follow: serine 55, serine 92, and serine 155. 2 disordered regions span residues 444–468 (GGSPAEQVNNPELKVDASGPDVPTR) and 485–555 (ALGH…RSGG). O-linked (Xyl...) (heparan sulfate) serine glycosylation is found at serine 500 and serine 502. Over residues 520-529 (PARPPRPPYP) the composition is skewed to pro residues. Residue glycine 554 is the site of GPI-anchor amidated glycine attachment. Positions 555-579 (GASIGFHTQTILILSLSALALLGPR) are cleaved as a propeptide — removed in mature form.

Belongs to the glypican family. Interacts (via heparan sulfate) with PTN; this interaction promotes neurite outgrowth through binding of PTN with chondroitin sulfate of proteoglycans, thereby releasing PTPRS of chondroitin sulfate proteoglycans (CSPGs) and leading to binding with heparan sulfate of GPC2. Interacts (heparan sulfate chain) with MDK; this interaction is inhibited by heparin followed by chondroitin sulfate E; this interaction induces GPC2 clustering through heparan sulfate chain; this interaction induces neuronal cell adhesion and neurite outgrowth.

It is found in the cell membrane. Its subcellular location is the secreted. It localises to the extracellular space. Functionally, cell surface proteoglycan that bears heparan sulfate. May fulfill a function related to the motile behaviors of developing neurons. This chain is Glypican-2 (GPC2), found in Homo sapiens (Human).